The following is a 270-amino-acid chain: 4-hydroxy-tetrahydrodipicolinate reductase (270 aa).

NAD(+) is bound by residues 9–14 and Glu-35; that span reads GAGGRM. Arg-36 is a binding site for NADP(+). NAD(+) contacts are provided by residues 99 to 101 and 123 to 126; these read GTT and ASNF. His-156 (proton donor/acceptor) is an active-site residue. His-157 lines the (S)-2,3,4,5-tetrahydrodipicolinate pocket. Lys-160 (proton donor) is an active-site residue. 166-167 contacts (S)-2,3,4,5-tetrahydrodipicolinate; the sequence is GT.

This sequence belongs to the DapB family.

It localises to the cytoplasm. The enzyme catalyses (S)-2,3,4,5-tetrahydrodipicolinate + NAD(+) + H2O = (2S,4S)-4-hydroxy-2,3,4,5-tetrahydrodipicolinate + NADH + H(+). The catalysed reaction is (S)-2,3,4,5-tetrahydrodipicolinate + NADP(+) + H2O = (2S,4S)-4-hydroxy-2,3,4,5-tetrahydrodipicolinate + NADPH + H(+). It participates in amino-acid biosynthesis; L-lysine biosynthesis via DAP pathway; (S)-tetrahydrodipicolinate from L-aspartate: step 4/4. In terms of biological role, catalyzes the conversion of 4-hydroxy-tetrahydrodipicolinate (HTPA) to tetrahydrodipicolinate. This Pasteurella multocida (strain Pm70) protein is 4-hydroxy-tetrahydrodipicolinate reductase.